A 326-amino-acid polypeptide reads, in one-letter code: Melanocortin receptor 4 (326 aa).

A compositionally biased stretch (basic residues) spans 1-14; it reads MNTSHHHGLHHSFR. The interval 1–31 is disordered; sequence MNTSHHHGLHHSFRNHSQGALPVGKPSHGDR. At 1-46 the chain is on the extracellular side; it reads MNTSHHHGLHHSFRNHSQGALPVGKPSHGDRGSASGCYEQLLISTE. 2 N-linked (GlcNAc...) asparagine glycosylation sites follow: Asn-2 and Asn-15. The chain crosses the membrane as a helical span at residues 47-67; the sequence is IFLTLGLVSLLENILVIAAIV. The Cytoplasmic portion of the chain corresponds to 68-71; sequence KNKN. The chain crosses the membrane as a helical span at residues 72-92; it reads LHSPMYFFICSLAVADLLVSV. The Extracellular segment spans residues 93 to 121; it reads SNASETVVMALITGGNLTNRESIIKNMDN. N-linked (GlcNAc...) asparagine glycans are attached at residues Asn-94 and Asn-108. The helical transmembrane segment at 122–142 threads the bilayer; that stretch reads VFDSMICSSLLASIWSLLAIA. Over 143–163 the chain is Cytoplasmic; that stretch reads VDRYITIFYALRYHNIMTQRR. The helical transmembrane segment at 164 to 184 threads the bilayer; it reads AGTIITCIWTFCTVSGVLFIV. The Extracellular segment spans residues 185–190; it reads YSESTT. Residues 191–211 form a helical membrane-spanning segment; sequence VLICLISMFFTMLALMASLYV. Over 212 to 246 the chain is Cytoplasmic; the sequence is HMFLLARLHMKRIAALPGNGPIWQAANMKGAITIT. Residues 247 to 267 form a helical membrane-spanning segment; the sequence is ILLGVFVVCWAPFFLHLILMI. Over 268–281 the chain is Extracellular; that stretch reads SCPRNPYCVCFMSH. A helical transmembrane segment spans residues 282–302; sequence FNMYLILIMCNSVIDPLIYAF. At 303 to 326 the chain is on the cytoplasmic side; it reads RSQEMRKTFKEICCCWYGLASLCV. A lipid anchor (S-palmitoyl cysteine) is attached at Cys-316.

The protein belongs to the G-protein coupled receptor 1 family. Homodimer; disulfide-linked, also forms higher order oligomers. Interacts with mrap2a; decreasing ligand-sensitivity. Interacts with mrap2b; increasing ligand-sensitivity and generation of cAMP.

The protein resides in the cell membrane. In terms of biological role, receptor specific to the heptapeptide core common to adrenocorticotropic hormone and alpha-, beta-, and gamma-MSH. Plays a central role in energy homeostasis and somatic growth. This receptor is mediated by G proteins that stimulate adenylate cyclase (cAMP). The chain is Melanocortin receptor 4 (mc4r) from Danio rerio (Zebrafish).